We begin with the raw amino-acid sequence, 149 residues long: Calmodulin (149 aa).

A2 is subject to N-acetylalanine. 4 EF-hand domains span residues E8 to N43, P44 to D79, D81 to K116, and L117 to K149. Residues D21, D23, D25, Q27, E32, D57, D59, N61, T63, E68, D94, D96, N98, E105, D130, D132, D134, R136, and E141 each contribute to the Ca(2+) site.

Belongs to the calmodulin family.

Its function is as follows. Calmodulin mediates the control of a large number of enzymes, ion channels and other proteins by Ca(2+). Among the enzymes to be stimulated by the calmodulin-Ca(2+) complex are a number of protein kinases and phosphatases. The polypeptide is Calmodulin (camA) (Emericella nidulans (strain FGSC A4 / ATCC 38163 / CBS 112.46 / NRRL 194 / M139) (Aspergillus nidulans)).